Reading from the N-terminus, the 633-residue chain is NADPH-dependent diflavin oxidoreductase 1 (633 aa).

One can recognise a Flavodoxin-like domain in the interval 5 to 149 (CTIIYATESG…EVEKWSQELI (145 aa)). FMN-binding positions include 11 to 16 (TESGTS), 58 to 61 (STTG), and Asp-131. One can recognise an FAD-binding FR-type domain in the interval 196 to 442 (TQFYKSKLKV…FIKESGARLP (247 aa)). FAD contacts are provided by residues 377 to 380 (RPFS) and 412 to 415 (GLCS). NADP(+) contacts are provided by residues Thr-456, 520–521 (SR), 528–532 (KVYVQ), and Asp-565. The interval 580 to 610 (KNNNNNNNNNNNNNNNNNNNNNNNNNDDENN) is disordered. The span at 581-604 (NNNNNNNNNNNNNNNNNNNNNNNN) shows a compositional bias: low complexity. Trp-633 serves as a coordination point for FAD.

The protein belongs to the NADPH-dependent diflavin oxidoreductase NDOR1 family. It in the N-terminal section; belongs to the flavodoxin family. This sequence in the C-terminal section; belongs to the flavoprotein pyridine nucleotide cytochrome reductase family. The cofactor is FAD. Requires FMN as cofactor.

It localises to the cytoplasm. It catalyses the reaction 2 oxidized [2Fe-2S]-[protein] + NADPH = 2 reduced [2Fe-2S]-[protein] + NADP(+) + H(+). In terms of biological role, NADPH-dependent reductase which is a central component of the cytosolic iron-sulfur (Fe-S) protein assembly (CIA) machinery. Transfers electrons from NADPH via its FAD and FMN prosthetic groups to the [2Fe-2S] cluster of the anamorsin/DRE2 homolog, another key component of the CIA machinery. In turn, this reduced cluster provides electrons for assembly of cytosolic iron-sulfur cluster proteins. In Dictyostelium discoideum (Social amoeba), this protein is NADPH-dependent diflavin oxidoreductase 1 (redC).